Here is a 1080-residue protein sequence, read N- to C-terminus: Presequence protease 2, chloroplastic/mitochondrial (1080 aa).

The N-terminal 84 residues, 1-84, are a transit peptide targeting the chloroplast and mitochondrion; it reads MLRSLTCSST…NGQFSRLSIR (84 aa). H161 lines the Zn(2+) pocket. The active-site Proton acceptor is the E164. H165 provides a ligand contact to Zn(2+). The active site involves E239. Residue E261 participates in Zn(2+) binding. R704 is a Mg(2+) binding site.

This sequence belongs to the peptidase M16 family. PreP subfamily. In terms of assembly, homodimer. The cofactor is Zn(2+). Requires Mg(2+) as cofactor. Expressed in leaves, flowers and roots, but not detected in siliques and shoots.

It localises to the plastid. It is found in the chloroplast stroma. Its subcellular location is the mitochondrion matrix. With respect to regulation, completely inhibited by the metal chelator orthophenanthroline. ATP-independent protease that degrades both mitochondrial and chloroplastic transit peptides after their cleavage. Also degrades other unstructured peptides. Specific for peptides in the range of 10 to 65 residues. Shows a preference for cleavage after small polar residues and before basic residues, but without any positional preference. The sequence is that of Presequence protease 2, chloroplastic/mitochondrial (PREP2) from Arabidopsis thaliana (Mouse-ear cress).